The sequence spans 265 residues: U6 snRNA phosphodiesterase 1 (265 aa).

The tract at residues 1-22 (MSLVCYESSSSGEDDDETISDN) is disordered. The active-site Proton acceptor is histidine 109. Residues 109–111 (HLS) and 195–201 (DFLLHIS) contribute to the AMP site. Residue 197 to 201 (LLHIS) participates in UMP binding. The active-site Proton donor is the histidine 199.

This sequence belongs to the 2H phosphoesterase superfamily. USB1 family.

It localises to the nucleus. It carries out the reaction a 3'-end uridylyl-uridine-RNA = a 3'-end 2',3'-cyclophospho-uridine-RNA + uridine. Functionally, 3'-5' RNA exonuclease that trims the 3' end of oligo(U) tracts of the pre-U6 small nuclear RNA (snRNA) molecule, leading to the formation of a U6 snRNA 3' end-terminated with a 2',3'-cyclic phosphate.d. Participates in the U6 snRNA 3' end processing that prevents U6 snRNA degradation. This chain is U6 snRNA phosphodiesterase 1, found in Schizosaccharomyces pombe (strain 972 / ATCC 24843) (Fission yeast).